A 309-amino-acid chain; its full sequence is Putative G-protein coupled receptor B0244.4 (309 aa).

6 helical membrane passes run 39 to 59 (SIIF…ACFL), 82 to 102 (YIFM…MLAL), 114 to 134 (IYFL…GSYV), 162 to 182 (FAIA…MFQA), 204 to 224 (IMLV…SFVL), and 256 to 276 (WTLF…FYLV).

The protein belongs to the G-protein coupled receptor 1 family. B0244 subfamily.

The protein resides in the cell membrane. The sequence is that of Putative G-protein coupled receptor B0244.4 from Caenorhabditis elegans.